Consider the following 175-residue polypeptide: Protein-export protein SecB (175 aa).

This sequence belongs to the SecB family. As to quaternary structure, homotetramer, a dimer of dimers. One homotetramer interacts with 1 SecA dimer.

The protein localises to the cytoplasm. In terms of biological role, one of the proteins required for the normal export of preproteins out of the cell cytoplasm. It is a molecular chaperone that binds to a subset of precursor proteins, maintaining them in a translocation-competent state. It also specifically binds to its receptor SecA. This is Protein-export protein SecB from Ehrlichia chaffeensis (strain ATCC CRL-10679 / Arkansas).